Consider the following 509-residue polypeptide: MNQLQAEINAANAVFPVSDSTKIPKVSQKLFGLLGDGFFPQLHPKGLKIADNIAALFDQYNLKSIALKNFDLNLERKNDIVIQGKVCYSFSIKMDFATIYEGDGSTIDLQFALNASTTNFANLTDLQDSFWQSGKDLNTQLFWKPSVHKLISNGTNDLTTLAQTALGDSLFDTKVNLTESVIEINNQTDVATKFREKVLNSFKQEREKAHAEHVEKLRKLEEERKLQEAEAKAKAEEVKKLEAEREAFNKSLTAASEFKQYWSKKNKDVTDKKQLAEALKISLEADRNRTFSFLIAGFRTAIDWYYNAKKENNDAKQKAFGSQGIQFPKDGLNGIYMPDWLRGELTSKSNINLKIKELKVQNKIESPTINWIDGVGIKQDKANPFNYRFEVDIKYTGGYQLYGFYAFAALFTKFPSSWSGEMNLKFIVDGSIPVYTVAKKDYPGSLFQFNDKDELLFTLYVKEQISVADPNFMNLLRGQNLHDLELVTGATKPPVVDLASYLHFVLLSA.

This sequence belongs to the MG032/MG096/MG288 family.

This is an uncharacterized protein from Mycoplasma pneumoniae (strain ATCC 29342 / M129 / Subtype 1) (Mycoplasmoides pneumoniae).